A 327-amino-acid chain; its full sequence is Fe-S cluster assembly protein DRE2 (327 aa).

The segment covering 1-14 has biased composition (polar residues); sequence MSPATVTIDTTPDF. 2 disordered regions span residues 1 to 20 and 153 to 179; these read MSPA…GGAP and NKGE…AAAA. The interval 17 to 144 is N-terminal SAM-like domain; it reads GGAPHSTLLL…EKPAEEVAAV (128 aa). Residues 145–214 are linker; it reads PLKFLKKKNK…EDELMTEEDL (70 aa). A compositionally biased stretch (low complexity) spans 164–179; sequence PAAATQPTAPAPAAAA. 4 residues coordinate [2Fe-2S] cluster: Cys224, Cys235, Cys238, and Cys240. Residues 224–240 form a fe-S binding site A region; it reads CAPKPGKKRRACKDCTC. Positions 290, 293, 301, and 304 each coordinate [4Fe-4S] cluster. Short sequence motifs (cx2C motif) lie at residues 290 to 293 and 301 to 304; these read CGSC and CADC. The interval 290-304 is fe-S binding site B; sequence CGSCALGDAFRCADC.

This sequence belongs to the anamorsin family. As to quaternary structure, monomer. Interacts with TAH18. Interacts with MIA40. [2Fe-2S] cluster serves as cofactor. It depends on [4Fe-4S] cluster as a cofactor.

The protein localises to the cytoplasm. Its subcellular location is the mitochondrion intermembrane space. Its function is as follows. Component of the cytosolic iron-sulfur (Fe-S) protein assembly (CIA) machinery required for the maturation of extramitochondrial Fe-S proteins. Part of an electron transfer chain functioning in an early step of cytosolic Fe-S biogenesis, facilitating the de novo assembly of a [4Fe-4S] cluster on the scaffold complex CFD1-NBP35. Electrons are transferred to DRE2 from NADPH via the FAD- and FMN-containing protein TAH18. TAH18-DRE2 are also required for the assembly of the diferric tyrosyl radical cofactor of ribonucleotide reductase (RNR), probably by providing electrons for reduction during radical cofactor maturation in the catalytic small subunit RNR2. The protein is Fe-S cluster assembly protein DRE2 of Pyricularia oryzae (strain 70-15 / ATCC MYA-4617 / FGSC 8958) (Rice blast fungus).